Consider the following 179-residue polypeptide: Large ribosomal subunit protein uL5 (179 aa).

Belongs to the universal ribosomal protein uL5 family. In terms of assembly, part of the 50S ribosomal subunit; part of the 5S rRNA/L5/L18/L25 subcomplex. Contacts the 5S rRNA and the P site tRNA. Forms a bridge to the 30S subunit in the 70S ribosome.

Functionally, this is one of the proteins that bind and probably mediate the attachment of the 5S RNA into the large ribosomal subunit, where it forms part of the central protuberance. In the 70S ribosome it contacts protein S13 of the 30S subunit (bridge B1b), connecting the 2 subunits; this bridge is implicated in subunit movement. Contacts the P site tRNA; the 5S rRNA and some of its associated proteins might help stabilize positioning of ribosome-bound tRNAs. The protein is Large ribosomal subunit protein uL5 of Vibrio vulnificus (strain CMCP6).